A 698-amino-acid polypeptide reads, in one-letter code: MANTREFSLDKTRNIGIMAHIDAGKTTTTERILYYTGKIHKIGETHDGASQMDWMAQEQERGITITSAATTAQWKNHRINIIDTPGHVDFTVEVERSLRVLDGAIAVLDAQSGVEPQTETVWRQASTYNVPRIVFVNKMDKIGADFKYSVSTIHDRLQANAHAIQLPIGAEDNFEGVIDLIEMKADLYDEDQLGTEWDTVDVPDEYKEEAQAARDDLIEALADIDDGIMEKYLGGEEISKEEIKAAIRKGTLALEFFPVLAGSAFKNKGVQMLMDAVVDYLPSPLDVKPYKATDPETEEEVDLIAGDDKPFAALAFKVATDPFVGRLTFIRVYQGTLESGSYVLNATKDKRERVGRLLQMHSNQRKEIPEVFSGDIAAAIGLKNTTTGDSLTSIEHPYHLESMEFPDPVIQVAVEPKTKADQDKMNVALQKLSEEDPTFKAETNPETGETLIAGMGELHLDIIVDRMRREFNVEATVGAPQVSYRETFTKSTQVQGKFVHQSGGKGQYGDVWVEFTPNEEGKGFEFEDAIVGGVVPREYIPSVEQGLKEAMANGVLAGYPLVDVKAKLYDGSYHDVDSSEAAFKIAASLALRNAVKTAGPVILEPIMKVDIVAPEDYLGDVMGHVTARRGNIEGMEERGNAQEVHAYVPLAEMFGYATTLRSATQGRGTFTMTFDHYEKVPKSVQEDIIKKNGGTPAK.

One can recognise a tr-type G domain in the interval aspartate 10–leucine 285. GTP contacts are provided by residues alanine 19 to threonine 26, aspartate 83 to histidine 87, and asparagine 137 to aspartate 140.

This sequence belongs to the TRAFAC class translation factor GTPase superfamily. Classic translation factor GTPase family. EF-G/EF-2 subfamily.

The protein resides in the cytoplasm. Functionally, catalyzes the GTP-dependent ribosomal translocation step during translation elongation. During this step, the ribosome changes from the pre-translocational (PRE) to the post-translocational (POST) state as the newly formed A-site-bound peptidyl-tRNA and P-site-bound deacylated tRNA move to the P and E sites, respectively. Catalyzes the coordinated movement of the two tRNA molecules, the mRNA and conformational changes in the ribosome. The polypeptide is Elongation factor G (Lactiplantibacillus plantarum (strain ATCC BAA-793 / NCIMB 8826 / WCFS1) (Lactobacillus plantarum)).